Here is a 233-residue protein sequence, read N- to C-terminus: MSSNNIKLKYDSGNILSKDVHSIGIIALGSHRENHGAALPIDTDSKIAANVALNVATKTGATFLGIFYGATEYDYIKHGHHLKKDDLVNKQIIPQLINIKKQLNIKSVIIVNGHGGNNLIIEDIDKISKKTELKIIFNNSIIESEGPHACTGELSMGAVLGITDMTSLKEHENFIKHPEVGMVGLKEARDNEPIINKEALTIEKEGFEVNMILGQDMLENAQKEIINEVKKLL.

4 residues coordinate Fe cation: glutamate 33, histidine 35, aspartate 44, and histidine 114.

Belongs to the creatininase superfamily. FAPy deformylase family. In terms of assembly, homodimer. Fe(2+) is required as a cofactor. Requires Zn(2+) as cofactor.

It catalyses the reaction 2-amino-5-formylamino-6-(5-phospho-D-ribosylamino)pyrimidin-4(3H)-one + H2O = 2,5-diamino-6-(1-D-ribosylamino)pyrimidin-4(3H)-one 5'-phosphate + formate + H(+). It participates in cofactor biosynthesis; coenzyme F420 biosynthesis. It functions in the pathway cofactor biosynthesis; riboflavin biosynthesis. In terms of biological role, catalyzes the hydrolysis of the formamide of 2-amino-5-formylamino-6-ribosylamino-4(3H)-pyrimidinone 5'-monophosphate (FAPy) to form 2,5-diamino-6-ribosylamino-4(3H)-pyrimidinone 5'-phosphate (APy). The chain is 2-amino-5-formylamino-6-ribosylaminopyrimidin-4(3H)-one 5'-monophosphate deformylase from Methanosphaera stadtmanae (strain ATCC 43021 / DSM 3091 / JCM 11832 / MCB-3).